The primary structure comprises 461 residues: Smoothelin-like protein 2 (461 aa).

Residues 55 to 88 adopt a coiled-coil conformation; sequence PLARTVADLQRDNQRLQAQLERLTRQVEALGLAS. Disordered stretches follow at residues 87–193 and 227–248; these read ASGM…LRLP and LNPS…KNSS. Residues 94 to 107 show a composition bias toward pro residues; it reads PGTPGTPSPPPAPG. The residue at position 96 (T96) is a Phosphothreonine. S101, S129, and S134 each carry phosphoserine. The segment covering 134–147 has biased composition (basic and acidic residues); sequence SLDHDEASESEMRK. S256 and S269 each carry phosphoserine. Positions 260 to 307 are disordered; the sequence is AVTASKHSNSPPLVTPPQSPVSPQPPAITQVHRQGERRRELVRSQTLP. Residues 272-285 are compositionally biased toward pro residues; it reads LVTPPQSPVSPQPP. Residue T274 is modified to Phosphothreonine. S278 bears the Phosphoserine mark. A compositionally biased stretch (basic and acidic residues) spans 292–301; the sequence is RQGERRRELV. S344 is subject to Phosphoserine. One can recognise a Calponin-homology (CH) domain in the interval 351–458; sequence SSIKQILLEW…YVQSLYNHLR (108 aa).

It belongs to the smoothelin family.

The sequence is that of Smoothelin-like protein 2 (SMTNL2) from Homo sapiens (Human).